The chain runs to 335 residues: DNA-directed RNA polymerase subunit alpha (335 aa).

An alpha N-terminal domain (alpha-NTD) region spans residues 1–233; the sequence is MMLNATEFLT…QQISIFVDLE (233 aa). The segment at 247–335 is alpha C-terminal domain (alpha-CTD); sequence VDPVLLRPVD…VDDRFSYRSR (89 aa).

It belongs to the RNA polymerase alpha chain family. Homodimer. The RNAP catalytic core consists of 2 alpha, 1 beta, 1 beta' and 1 omega subunit. When a sigma factor is associated with the core the holoenzyme is formed, which can initiate transcription.

The catalysed reaction is RNA(n) + a ribonucleoside 5'-triphosphate = RNA(n+1) + diphosphate. Its function is as follows. DNA-dependent RNA polymerase catalyzes the transcription of DNA into RNA using the four ribonucleoside triphosphates as substrates. This Psychrobacter arcticus (strain DSM 17307 / VKM B-2377 / 273-4) protein is DNA-directed RNA polymerase subunit alpha.